The following is a 197-amino-acid chain: Ribosome maturation factor RimP (197 aa).

The protein belongs to the RimP family.

The protein resides in the cytoplasm. In terms of biological role, required for maturation of 30S ribosomal subunits. The protein is Ribosome maturation factor RimP of Acidovorax ebreus (strain TPSY) (Diaphorobacter sp. (strain TPSY)).